A 779-amino-acid chain; its full sequence is Acyl-homoserine lactone acylase PvdQ (779 aa).

An N-terminal signal peptide occupies residues 1 to 25; that stretch reads MIISRPLCSFVFAGLSFAVILPAQA. The propeptide at 202–223 is spacer peptide; that stretch reads AQQAQALQLAAARNQRFALERG. The active-site Nucleophile is Ser224. Over residues 731–746 the composition is skewed to polar residues; it reads ESSNPQSAHSSDQTEA. A disordered region spans residues 731 to 750; it reads ESSNPQSAHSSDQTEAFSKK.

Belongs to the peptidase S45 family. As to quaternary structure, heterodimer of an alpha subunit and a beta subunit processed from the same precursor.

The protein resides in the periplasm. It catalyses the reaction an N-acyl-L-homoserine lactone + H2O = L-homoserine lactone + a carboxylate. Its function is as follows. Catalyzes the deacylation of acyl-homoserine lactone (AHL or acyl-HSL), releasing homoserine lactone (HSL) and the corresponding fatty acid. Possesses a specificity for the degradation of long-chain acyl-HSLs (side chains of 11 to 14 carbons in length). This Pseudomonas syringae pv. syringae (strain B728a) protein is Acyl-homoserine lactone acylase PvdQ (pvdQ).